A 287-amino-acid chain; its full sequence is Nematocyst expressed protein 6 (287 aa).

A signal peptide spans 1 to 20 (MKGFIFAGVLVSALICLAEG). The 197-residue stretch at 53-249 (RAALRDRYLW…RQTNLMYKCN (197 aa)) folds into the Peptidase M12A domain. Cystine bridges form between cysteine 95/cysteine 248 and cysteine 116/cysteine 139. Histidine 146 is a binding site for Zn(2+). Residue glutamate 147 is part of the active site. Histidine 150 and histidine 156 together coordinate Zn(2+). Positions 249 to 287 (NAQGDSELQPVNDEDEDKDGGDSKKKPDPKGPKPGEIEE) are disordered. Residues 268 to 287 (GGDSKKKPDPKGPKPGEIEE) show a composition bias toward basic and acidic residues.

Requires Zn(2+) as cofactor. In terms of tissue distribution, nematocyte and pharyngeal gland.

It localises to the secreted. Its subcellular location is the nematocyst. Its function is as follows. Metalloprotease. The sequence is that of Nematocyst expressed protein 6 from Nematostella vectensis (Starlet sea anemone).